Reading from the N-terminus, the 255-residue chain is S-adenosyl-L-methionine-dependent uroporphyrinogen III methyltransferase (255 aa).

Residues P15, 91-93, 121-122, M175, and A232 each bind S-adenosyl-L-homocysteine; these read GGD and TS.

This sequence belongs to the precorrin methyltransferase family. Homodimer.

It catalyses the reaction uroporphyrinogen III + 2 S-adenosyl-L-methionine = precorrin-2 + 2 S-adenosyl-L-homocysteine + H(+). The protein operates within porphyrin-containing compound metabolism; siroheme biosynthesis; precorrin-2 from uroporphyrinogen III: step 1/1. Involved in the archaeal biosynthesis of heme. Catalyzes the methylation of carbons 2 and 7 of uroporphyrinogen-III (UROGEN) to yield precorrin-2. It does not catalyze the overmethylation of precorrin-2 to trimethylpyrrocorphin. This Methanosarcina barkeri (strain Fusaro / DSM 804) protein is S-adenosyl-L-methionine-dependent uroporphyrinogen III methyltransferase.